Consider the following 316-residue polypeptide: Ornithine carbamoyltransferase (316 aa).

Carbamoyl phosphate-binding positions include S59–T62, Q86, R110, and H137–Q140. Residues N168, D232, and S236 to M237 each bind L-ornithine. Carbamoyl phosphate-binding positions include C273 to L274 and R301.

The protein belongs to the aspartate/ornithine carbamoyltransferase superfamily. OTCase family.

Its subcellular location is the cytoplasm. The catalysed reaction is carbamoyl phosphate + L-ornithine = L-citrulline + phosphate + H(+). Its pathway is amino-acid biosynthesis; L-arginine biosynthesis; L-arginine from L-ornithine and carbamoyl phosphate: step 1/3. Functionally, reversibly catalyzes the transfer of the carbamoyl group from carbamoyl phosphate (CP) to the N(epsilon) atom of ornithine (ORN) to produce L-citrulline. The sequence is that of Ornithine carbamoyltransferase (argF) from Listeria monocytogenes serovar 1/2a (strain ATCC BAA-679 / EGD-e).